Reading from the N-terminus, the 277-residue chain is Putative hydro-lyase BPP3031 (277 aa).

Belongs to the D-glutamate cyclase family.

The sequence is that of Putative hydro-lyase BPP3031 from Bordetella parapertussis (strain 12822 / ATCC BAA-587 / NCTC 13253).